We begin with the raw amino-acid sequence, 293 residues long: Ribosomal protein L11 methyltransferase (293 aa).

Positions 145, 166, 188, and 230 each coordinate S-adenosyl-L-methionine.

Belongs to the methyltransferase superfamily. PrmA family.

The protein resides in the cytoplasm. It catalyses the reaction L-lysyl-[protein] + 3 S-adenosyl-L-methionine = N(6),N(6),N(6)-trimethyl-L-lysyl-[protein] + 3 S-adenosyl-L-homocysteine + 3 H(+). Its function is as follows. Methylates ribosomal protein L11. This is Ribosomal protein L11 methyltransferase from Actinobacillus pleuropneumoniae serotype 5b (strain L20).